The sequence spans 818 residues: Glycerol-3-phosphate acyltransferase (818 aa).

The HXXXXD motif motif lies at Cys305 to Met310.

It belongs to the GPAT/DAPAT family.

The protein resides in the cell inner membrane. It carries out the reaction sn-glycerol 3-phosphate + an acyl-CoA = a 1-acyl-sn-glycero-3-phosphate + CoA. The protein operates within phospholipid metabolism; CDP-diacylglycerol biosynthesis; CDP-diacylglycerol from sn-glycerol 3-phosphate: step 1/3. This Edwardsiella ictaluri (strain 93-146) protein is Glycerol-3-phosphate acyltransferase.